Reading from the N-terminus, the 374-residue chain is Nudix hydrolase 20, chloroplastic (374 aa).

The N-terminal 49 residues, 1–49, are a transit peptide targeting the chloroplast; that stretch reads MASGFCSLALTVTTSLFSSHAITRRVLPILRWRSSSMSLSPLRHSRALS. The region spanning 205–346 is the Nudix hydrolase domain; sequence GYGVHMNGYV…KANCSLVIID (142 aa). The short motif at 244–265 is the Nudix box element; the sequence is GGLPHGISCGGNLVKECEEEAG. Residues Glu-259 and Glu-263 each contribute to the Mg(2+) site.

Belongs to the Nudix hydrolase family. Mg(2+) serves as cofactor. The cofactor is Mn(2+). As to expression, expressed in leaves and inflorescences.

The protein localises to the plastid. The protein resides in the chloroplast. Functionally, probably mediates the hydrolysis of some nucleoside diphosphate derivatives. This chain is Nudix hydrolase 20, chloroplastic (NUDT20), found in Arabidopsis thaliana (Mouse-ear cress).